The following is a 524-amino-acid chain: Cytochrome P450 6k1 (524 aa).

Residue Cys464 coordinates heme.

It belongs to the cytochrome P450 family. The cofactor is heme.

The protein resides in the endoplasmic reticulum membrane. The protein localises to the microsome membrane. This chain is Cytochrome P450 6k1 (CYP6K1), found in Blattella germanica (German cockroach).